We begin with the raw amino-acid sequence, 584 residues long: Sodium/calcium exchanger NCL1 (584 aa).

5 helical membrane-spanning segments follow: residues 77–97, 120–140, 154–174, 215–235, and 245–265; these read FLPC…YGFL, LVGG…LVLV, VLIG…LLWG, AARI…PKML, and VLLA…YQVF. 2 consecutive EF-hand domains span residues 305–340 and 345–380; these read PNED…INFE and DKND…WLNE. Ca(2+)-binding residues include Asp318, Asp320, Ser322, Thr324, Glu329, Asp358, Ser360, Asn362, and Glu369. Helical transmembrane passes span 426-446, 466-486, 504-524, 531-551, and 561-581; these read WCIT…AAFA, FISF…SAII, YGGV…LIYI, FSSE…FTSF, and LVAY…DFVF.

It belongs to the Ca(2+):cation antiporter (CaCA) (TC 2.A.19) family.

Its subcellular location is the cell membrane. May function as a sodium/calcium exchanger (NCX) and participate in the maintenance of calcium homeostasis. May play a role abiotic stress responses. This chain is Sodium/calcium exchanger NCL1, found in Oryza sativa subsp. japonica (Rice).